Reading from the N-terminus, the 233-residue chain is Ion-translocating oxidoreductase complex subunit E (233 aa).

The next 6 helical transmembrane spans lie at 18-38 (ALVQLLGLCPLLAVSSTATNA), 39-59 (LGLGLATTLVLVCTNTAVSAL), 69-89 (IPIYVMIIASVVSTVQMLINA), 92-112 (FGLYQSLGIFIPLIVTNCIVI), 128-148 (ALDGFAMGMGATCALFVLGAL), and 182-202 (PFLLAMLPPGAFIGLGLLLAG).

This sequence belongs to the NqrDE/RnfAE family. The complex is composed of six subunits: RnfA, RnfB, RnfC, RnfD, RnfE and RnfG.

It is found in the cell inner membrane. In terms of biological role, part of a membrane-bound complex that couples electron transfer with translocation of ions across the membrane. In Yersinia pestis bv. Antiqua (strain Angola), this protein is Ion-translocating oxidoreductase complex subunit E.